The chain runs to 358 residues: Trace amine-associated receptor 7d (358 aa).

The Extracellular segment spans residues 1–47 (MATGDDSFPWDQDSILSRDLFSATSTELCYENLNRSCVRSPYSPGPR). The N-linked (GlcNAc...) asparagine glycan is linked to asparagine 34. Intrachain disulfides connect cysteine 37–cysteine 201 and cysteine 120–cysteine 205. The chain crosses the membrane as a helical span at residues 48-68 (LILYAVFGFGAVLAVCGNLLV). Residues 69–83 (MTSILHFRQLHSPAN) are Cytoplasmic-facing. The chain crosses the membrane as a helical span at residues 84–104 (FLVASLACADFLVGVMVMPFS). The Extracellular portion of the chain corresponds to 105 to 121 (MVRSVEGCWYFGESYCK). A helical transmembrane segment spans residues 122 to 143 (FHSCFEGSFCYSSLFHLCFISV). At 144–166 (DRYIAVSDPLTYPTRFTASVSGK) the chain is on the cytoplasmic side. A helical membrane pass occupies residues 167–187 (CITFSWLLSIIYSFSLLYTGA). Residues 188-212 (NDAGLEDLVSALTCVGGCQIAVNQT) lie on the Extracellular side of the membrane. N-linked (GlcNAc...) asparagine glycosylation is present at asparagine 210. The helical transmembrane segment at 213-233 (WVFINFLLFLIPTLVMITVYS) threads the bilayer. The Cytoplasmic segment spans residues 234–274 (KIFLIAKQQAQNIEKMSKQTARASESYKDRVTKRERKAAKT). The helical transmembrane segment at 275–295 (LGIAVAAFLLSWLPYFIDSII) threads the bilayer. The Extracellular segment spans residues 296–309 (DAFLGFITPTYVYE). A helical transmembrane segment spans residues 310–333 (ILVWIVYYNSAMNPLIYAFFYSWF). At 334-358 (RKAIKLIVSGKILRENSSTTNLFPE) the chain is on the cytoplasmic side.

The protein belongs to the G-protein coupled receptor 1 family. In terms of tissue distribution, specifically expressed in neurons of the olfactory epithelium.

It localises to the cell membrane. Olfactory receptor specific for trace amines, such as beta-phenylethylamine (beta-PEA). Trace amine compounds are enriched in animal body fluids and act on trace amine-associated receptors (TAARs) to elicit both intraspecific and interspecific innate behaviors. Ligand-binding causes a conformation change that triggers signaling via G(s)-class of G alpha proteins (GNAL or GNAS). This chain is Trace amine-associated receptor 7d, found in Mus musculus (Mouse).